The chain runs to 145 residues: Transcriptional regulator SlyA (145 aa).

The HTH marR-type domain maps to 2-135 (ELPLGSDLAR…LALLVARLEK (134 aa)). Positions 49–72 (QIQLAKAIGIEQPSLVRTLDQLEE) form a DNA-binding region, H-T-H motif.

This sequence belongs to the SlyA family. As to quaternary structure, homodimer.

Its function is as follows. Transcription regulator that can specifically activate or repress expression of target genes. This chain is Transcriptional regulator SlyA, found in Pectobacterium atrosepticum (strain SCRI 1043 / ATCC BAA-672) (Erwinia carotovora subsp. atroseptica).